A 261-amino-acid chain; its full sequence is Ribosomal RNA small subunit methyltransferase A (261 aa).

Residues histidine 13, leucine 15, glycine 40, glutamate 61, aspartate 85, and asparagine 105 each contribute to the S-adenosyl-L-methionine site.

The protein belongs to the class I-like SAM-binding methyltransferase superfamily. rRNA adenine N(6)-methyltransferase family. RsmA subfamily.

Its subcellular location is the cytoplasm. It catalyses the reaction adenosine(1518)/adenosine(1519) in 16S rRNA + 4 S-adenosyl-L-methionine = N(6)-dimethyladenosine(1518)/N(6)-dimethyladenosine(1519) in 16S rRNA + 4 S-adenosyl-L-homocysteine + 4 H(+). Specifically dimethylates two adjacent adenosines (A1518 and A1519) in the loop of a conserved hairpin near the 3'-end of 16S rRNA in the 30S particle. May play a critical role in biogenesis of 30S subunits. The polypeptide is Ribosomal RNA small subunit methyltransferase A (Flavobacterium johnsoniae (strain ATCC 17061 / DSM 2064 / JCM 8514 / BCRC 14874 / CCUG 350202 / NBRC 14942 / NCIMB 11054 / UW101) (Cytophaga johnsonae)).